Consider the following 106-residue polypeptide: uncharacterized protein (106 aa).

It localises to the mitochondrion. This is an uncharacterized protein from Claviceps purpurea (Ergot fungus).